The following is a 257-amino-acid chain: (R)-2-haloacid dehalogenase (257 aa).

It belongs to the HAD-like hydrolase superfamily. S-2-haloalkanoic acid dehalogenase family.

The enzyme catalyses an (R)-2-haloacid + H2O = a (2S)-2-hydroxycarboxylate + a halide anion + H(+). Functionally, catalyzes the hydrolytic dehalogenation of small (R)-2-haloalkanoic acids to yield the corresponding (S)-2-hydroxyalkanoic acids. Acts on acids of short chain lengths, C(2) to C(4), with inversion of configuration at C-2. The polypeptide is (R)-2-haloacid dehalogenase (dehI) (Rhizobium sp. (strain NHG3)).